The primary structure comprises 425 residues: Voltage-dependent calcium channel gamma-8 subunit (425 aa).

The next 4 membrane-spanning stretches (helical) occupy residues 19-39, 129-149, 158-178, and 208-228; these read VQVL…TIAI, SIFP…VAAS, IILG…IGVI, and FGGL…NIYI. Phosphoserine occurs at positions 252 and 255. A disordered region spans residues 272–304; sequence RRSRSSSRSSEPSPSRDASPGGPGGPGFASTDI. Positions 277–287 are enriched in low complexity; sequence SSRSSEPSPSR. The helical transmembrane segment at 318–338 threads the bilayer; sequence VAAGLAGAGGGGGGAVGAFGG. A compositionally biased stretch (gly residues) spans 343–354; sequence AGGGGGGGGGAG. Disordered stretches follow at residues 343–365 and 377–425; these read AGGG…ASGF and GGGV…TTPV. The span at 387–401 shows a compositional bias: pro residues; it reads PPAPPAPAPPAPSAP. Residues 412–425 show a composition bias toward polar residues; it reads ASNTNTLNRKTTPV.

It belongs to the PMP-22/EMP/MP20 family. CACNG subfamily. Interacts with CACNA1C. Identified in a complex with the L-type calcium channel subunits CACNA1C, CACNA2D1 and either CACNB1 or CACNB2. Acts as an auxiliary subunit for AMPA-selective glutamate receptors (AMPARs). Found in a complex with GRIA1, GRIA2, GRIA3, GRIA4, CNIH2, CNIH3, CACNG2, CACNG3, CACNG4, CACNG5 and CACNG7. Interacts with CNIH2. Found in a complex with GRIA1, GRIA2, GRIA3, GRIA4, DLG4 and CNIH2. Palmitoylated. Probably palmitoylated by ZDHHC3 and ZDHHC7. As to expression, detected in heart left ventricle.

The protein resides in the cell membrane. It is found in the postsynaptic density membrane. Functionally, regulates the activity of L-type calcium channels that contain CACNA1C as pore-forming subunit. Regulates the trafficking and gating properties of AMPA-selective glutamate receptors (AMPARs). Promotes their targeting to the cell membrane and synapses and modulates their gating properties by slowing their rates of activation, deactivation and desensitization and by mediating their resensitization. Does not show subunit-specific AMPA receptor regulation and regulates all AMPAR subunits. In Homo sapiens (Human), this protein is Voltage-dependent calcium channel gamma-8 subunit.